The sequence spans 2594 residues: Protein sevenless (2594 aa).

Disordered regions lie at residues 1-34 (MFWR…PKRL) and 49-92 (KMST…RVRR). Residues 1 to 2141 (MFWREDAAQQ…FVSPEKRGSL (2141 aa)) are Extracellular-facing. Positions 9-26 (QQQQQQQQQQQQQQQQQQ) are enriched in low complexity. Asn77, Asn401, Asn508, Asn532, Asn641, Asn667, Asn778, Asn797, Asn874, and Asn980 each carry an N-linked (GlcNAc...) asparagine glycan. Fibronectin type-III domains lie at 358-462 (ETTQ…TPME) and 468-560 (APII…SPLE). Residues 838–938 (PPAPRELRAL…APLATRTWPL (101 aa)) form the Fibronectin type-III 3 domain. The stretch at 1024 to 1066 (GLLYWTDLARDCVQRLDPFSGERELLPIFGARHLALDSAQGHL) is one LDL-receptor class B repeat. Fibronectin type-III domains are found at residues 1227 to 1317 (LAVP…QLDT) and 1324 to 1430 (QPRR…VQSV). Asn1257, Asn1344, Asn1382, Asn1577, Asn1587, Asn1665, Asn1752, Asn1776, Asn1824, Asn1908, Asn1966, and Asn2088 each carry an N-linked (GlcNAc...) asparagine glycan. 4 consecutive Fibronectin type-III domains span residues 1711–1814 (TAAA…TLHT), 1821–1920 (APRN…SYAP), 1922–2010 (PPLQ…TLGD), and 2014–2132 (APGR…AEPF). The chain crosses the membrane as a helical span at residues 2142–2162 (VLAIIAPAAIVSSCVLALVLV). Topologically, residues 2163 to 2594 (RKLQKRRHRA…LYANEGISGL (432 aa)) are cytoplasmic. Positions 2224 to 2495 (LTLLRFLGSG…KRCLSTLQAL (272 aa)) constitute a Protein kinase domain. Residues 2230 to 2238 (LGSGAFGEV) and Lys2257 contribute to the ATP site. The active-site Proton acceptor is Asp2355. Residue Tyr2391 is modified to Phosphotyrosine; by autocatalysis. Residues 2543–2568 (TVSTTDADTTGSPTTPTAPTTPTTTT) form a disordered region. Residues 2545 to 2568 (STTDADTTGSPTTPTAPTTPTTTT) show a composition bias toward low complexity.

This sequence belongs to the protein kinase superfamily. Tyr protein kinase family. Insulin receptor subfamily.

The protein localises to the cell membrane. The enzyme catalyses L-tyrosyl-[protein] + ATP = O-phospho-L-tyrosyl-[protein] + ADP + H(+). Its function is as follows. Receptor for an extracellular signal required to instruct a cell to differentiate into a R7 photoreceptor. The ligand for Sev is the Boss (Bride of Sevenless) protein. This is Protein sevenless (sev) from Drosophila virilis (Fruit fly).